A 318-amino-acid chain; its full sequence is MVSTYLLANFGGPRHSHDVEVFLTSLLTDRDVTGGCLPSFLHKRLFSFIAKKRAPKVVPQYNCIGGYSPIYQDTEALAKTLSSHLDAPVITFHRYLPDTHSQTIQQLKTLGDLPVVGVPLFPHFTYAVTGSIVRFIHNHLPSLNISWVAHFGNHPQFISCMIDHILEFLQSHDIPTHDCCLLFSAHGLPMRYVNKGDPYNVQCEKSFAAISERLPNIETFLCYQSKFGLGKWLTPSTKEVCKTLKTNKKYVLIVPFGFTSDHIETLYEIEKEYIAILIDRKYQALRVPAIYQSPQWVQSLATIIQSTRYVEKHSLIKS.

Positions 186 and 264 each coordinate Fe cation.

Belongs to the ferrochelatase family.

It is found in the cytoplasm. The catalysed reaction is heme b + 2 H(+) = protoporphyrin IX + Fe(2+). It participates in porphyrin-containing compound metabolism; protoheme biosynthesis; protoheme from protoporphyrin-IX: step 1/1. Catalyzes the ferrous insertion into protoporphyrin IX. The polypeptide is Ferrochelatase (Chlamydia abortus (strain DSM 27085 / S26/3) (Chlamydophila abortus)).